A 79-amino-acid chain; its full sequence is Small ribosomal subunit protein uS17 (79 aa).

Belongs to the universal ribosomal protein uS17 family. As to quaternary structure, part of the 30S ribosomal subunit.

Its function is as follows. One of the primary rRNA binding proteins, it binds specifically to the 5'-end of 16S ribosomal RNA. This is Small ribosomal subunit protein uS17 from Rhizobium etli (strain CIAT 652).